The primary structure comprises 469 residues: Ribulose bisphosphate carboxylase large chain (469 aa).

The propeptide occupies 1–2; that stretch reads MS. N-acetylproline is present on proline 3. Lysine 14 is subject to N6,N6,N6-trimethyllysine. Substrate contacts are provided by asparagine 123 and threonine 173. The Proton acceptor role is filled by lysine 175. Lysine 177 serves as a coordination point for substrate. 3 residues coordinate Mg(2+): lysine 201, aspartate 203, and glutamate 204. Position 201 is an N6-carboxylysine (lysine 201). Histidine 294 functions as the Proton acceptor in the catalytic mechanism. Substrate-binding residues include arginine 295, histidine 327, and serine 379.

This sequence belongs to the RuBisCO large chain family. Type I subfamily. Heterohexadecamer of 8 large chains and 8 small chains; disulfide-linked. The disulfide link is formed within the large subunit homodimers. Mg(2+) serves as cofactor. The disulfide bond which can form in the large chain dimeric partners within the hexadecamer appears to be associated with oxidative stress and protein turnover.

Its subcellular location is the plastid. It is found in the chloroplast. The enzyme catalyses 2 (2R)-3-phosphoglycerate + 2 H(+) = D-ribulose 1,5-bisphosphate + CO2 + H2O. It carries out the reaction D-ribulose 1,5-bisphosphate + O2 = 2-phosphoglycolate + (2R)-3-phosphoglycerate + 2 H(+). RuBisCO catalyzes two reactions: the carboxylation of D-ribulose 1,5-bisphosphate, the primary event in carbon dioxide fixation, as well as the oxidative fragmentation of the pentose substrate in the photorespiration process. Both reactions occur simultaneously and in competition at the same active site. In Brexia madagascariensis, this protein is Ribulose bisphosphate carboxylase large chain.